A 376-amino-acid chain; its full sequence is Erythronate-4-phosphate dehydrogenase (376 aa).

Residues Ser-45 and Thr-67 each contribute to the substrate site. NAD(+) contacts are provided by residues 127 to 128, Asp-147, and Thr-176; that span reads QV. The active site involves Arg-209. Asp-233 serves as a coordination point for NAD(+). Glu-238 is a catalytic residue. Catalysis depends on His-255, which acts as the Proton donor. Gly-258 provides a ligand contact to NAD(+). Tyr-259 contacts substrate.

Belongs to the D-isomer specific 2-hydroxyacid dehydrogenase family. PdxB subfamily. As to quaternary structure, homodimer.

The protein localises to the cytoplasm. It catalyses the reaction 4-phospho-D-erythronate + NAD(+) = (R)-3-hydroxy-2-oxo-4-phosphooxybutanoate + NADH + H(+). The protein operates within cofactor biosynthesis; pyridoxine 5'-phosphate biosynthesis; pyridoxine 5'-phosphate from D-erythrose 4-phosphate: step 2/5. In terms of biological role, catalyzes the oxidation of erythronate-4-phosphate to 3-hydroxy-2-oxo-4-phosphonooxybutanoate. The sequence is that of Erythronate-4-phosphate dehydrogenase from Aliivibrio fischeri (strain ATCC 700601 / ES114) (Vibrio fischeri).